The following is a 507-amino-acid chain: Protein disulfide-isomerase (507 aa).

The signal sequence occupies residues 1–20 (MASMVSFCFLLLFLAFFASS). The 124-residue stretch at 21–144 (FNEIYAEESE…IVDYLKKQSG (124 aa)) folds into the Thioredoxin 1 domain. Catalysis depends on nucleophile residues C62 and C65. A disulfide bridge connects residues C62 and C65. N181 and N278 each carry an N-linked (GlcNAc...) asparagine glycan. Positions 365–485 (YRKSEPIPEH…FIEFIEKNRE (121 aa)) constitute a Thioredoxin 2 domain. Residues C407 and C410 each act as nucleophile in the active site. An intrachain disulfide couples C407 to C410. The segment at 484–507 (REKSSKKESIVKDDQTDSETKAEL) is disordered. The Prevents secretion from ER motif lies at 504–507 (KAEL).

It belongs to the protein disulfide isomerase family.

It is found in the endoplasmic reticulum lumen. The enzyme catalyses Catalyzes the rearrangement of -S-S- bonds in proteins.. In terms of biological role, participates in the folding of proteins containing disulfide bonds, may be involved in glycosylation, prolyl hydroxylation and triglyceride transfer. The protein is Protein disulfide-isomerase (PDI) of Datisca glomerata (Durango root).